Here is a 231-residue protein sequence, read N- to C-terminus: 7-cyano-7-deazaguanine synthase (231 aa).

F8–L18 lines the ATP pocket. 4 residues coordinate Zn(2+): C187, C196, C199, and C202.

It belongs to the QueC family. Requires Zn(2+) as cofactor.

The catalysed reaction is 7-carboxy-7-deazaguanine + NH4(+) + ATP = 7-cyano-7-deazaguanine + ADP + phosphate + H2O + H(+). Its pathway is purine metabolism; 7-cyano-7-deazaguanine biosynthesis. In terms of biological role, catalyzes the ATP-dependent conversion of 7-carboxy-7-deazaguanine (CDG) to 7-cyano-7-deazaguanine (preQ(0)). This chain is 7-cyano-7-deazaguanine synthase, found in Vibrio cholerae serotype O1 (strain ATCC 39541 / Classical Ogawa 395 / O395).